The following is a 453-amino-acid chain: Allantoinase (453 aa).

Positions 59, 61, 146, 186, 242, and 315 each coordinate Zn(2+). The residue at position 146 (K146) is an N6-carboxylysine.

This sequence belongs to the metallo-dependent hydrolases superfamily. Allantoinase family. Homotetramer. Zn(2+) serves as cofactor. Carboxylation allows a single lysine to coordinate two zinc ions.

The catalysed reaction is (S)-allantoin + H2O = allantoate + H(+). Its pathway is nitrogen metabolism; (S)-allantoin degradation; allantoate from (S)-allantoin: step 1/1. Functionally, catalyzes the conversion of allantoin (5-ureidohydantoin) to allantoic acid by hydrolytic cleavage of the five-member hydantoin ring. The protein is Allantoinase of Salmonella paratyphi B (strain ATCC BAA-1250 / SPB7).